The sequence spans 350 residues: Biotin synthase (350 aa).

Residues 41-268 (NEVQISRLLS…LSRVRLSAGR (228 aa)) form the Radical SAM core domain. Positions 56, 60, and 63 each coordinate [4Fe-4S] cluster. [2Fe-2S] cluster is bound by residues Cys100, Cys131, Cys191, and Arg263.

Belongs to the radical SAM superfamily. Biotin synthase family. In terms of assembly, homodimer. [4Fe-4S] cluster serves as cofactor. It depends on [2Fe-2S] cluster as a cofactor.

The enzyme catalyses (4R,5S)-dethiobiotin + (sulfur carrier)-SH + 2 reduced [2Fe-2S]-[ferredoxin] + 2 S-adenosyl-L-methionine = (sulfur carrier)-H + biotin + 2 5'-deoxyadenosine + 2 L-methionine + 2 oxidized [2Fe-2S]-[ferredoxin]. Its pathway is cofactor biosynthesis; biotin biosynthesis; biotin from 7,8-diaminononanoate: step 2/2. Its function is as follows. Catalyzes the conversion of dethiobiotin (DTB) to biotin by the insertion of a sulfur atom into dethiobiotin via a radical-based mechanism. This Shewanella baltica (strain OS223) protein is Biotin synthase.